The following is a 276-amino-acid chain: 4-hydroxy-tetrahydrodipicolinate reductase (276 aa).

NAD(+) is bound by residues 10-15 (GALGKM), Asp36, and 109-111 (GTT). The Proton donor/acceptor role is filled by His165. His166 serves as a coordination point for (S)-2,3,4,5-tetrahydrodipicolinate. Catalysis depends on Lys169, which acts as the Proton donor. 175–176 (GT) serves as a coordination point for (S)-2,3,4,5-tetrahydrodipicolinate.

It belongs to the DapB family.

Its subcellular location is the cytoplasm. The enzyme catalyses (S)-2,3,4,5-tetrahydrodipicolinate + NAD(+) + H2O = (2S,4S)-4-hydroxy-2,3,4,5-tetrahydrodipicolinate + NADH + H(+). It carries out the reaction (S)-2,3,4,5-tetrahydrodipicolinate + NADP(+) + H2O = (2S,4S)-4-hydroxy-2,3,4,5-tetrahydrodipicolinate + NADPH + H(+). It functions in the pathway amino-acid biosynthesis; L-lysine biosynthesis via DAP pathway; (S)-tetrahydrodipicolinate from L-aspartate: step 4/4. In terms of biological role, catalyzes the conversion of 4-hydroxy-tetrahydrodipicolinate (HTPA) to tetrahydrodipicolinate. The polypeptide is 4-hydroxy-tetrahydrodipicolinate reductase (Prochlorococcus marinus (strain SARG / CCMP1375 / SS120)).